The primary structure comprises 196 residues: Sesquiterpene phosphatase astK (196 aa).

Belongs to the HAD-like hydrolase superfamily.

The enzyme catalyses (S,S)-drim-8-en-11-yl phosphate + H2O = (S,S)-drim-8-en-11-ol + phosphate. It participates in secondary metabolite biosynthesis; terpenoid biosynthesis. Its function is as follows. Sesquiterpene phosphatase; part of the gene cluster that mediates the biosynthesis of astellolides, drimane-type sesquiterpene esters that show antimicrobial, anti-inflammatory, and anti-tumor activities. The first step in astellolide biosynthesis is performed by the sesquiterpene cyclase astC that catalyzes the formation of drimanyl pyrophosphate from farnesyl pyrophosphate. Drimanyl pyrophosphate is then dephosphorylated by the sesquiterpene phosphatase astI to produce drimanyl monophosphate which is further dephosphorylated to drim-8-ene-11-ol by atsK. Drim-8-ene-11-ol is converted to confertifolin, probably by the cytochrome P450 monooxygenase astD and/or the dehydrogenase astE. The cytochrome P450 monooxygenases astB, astF and astJ then hydroxylate confertifolin at C6, C14, or C15 to form trihydroxy confertifolin. The nonribosomal peptide synthetase astA catalyzes ester bond formation between trihydroxy contifolin and benzoic acid (BA) or 4-hydroxy benzoic acid (4HBA), leading to the formation of dideacetyl astellolides A and B, respectively. Finally, the O-acetyltransferase astG converts dideacetyl astellolides A and B into deacetyl astellolides A and B. This chain is Sesquiterpene phosphatase astK, found in Aspergillus oryzae (strain ATCC 42149 / RIB 40) (Yellow koji mold).